The following is a 320-amino-acid chain: Mitochondrial glycine transporter (320 aa).

Solcar repeat units lie at residues 8-92 (SKTT…LRQG), 121-205 (LSNW…LKRR), and 223-307 (SSSS…LILR). Helical transmembrane passes span 14–39 (FAAG…TRVQ), 67–93 (GTLP…RQGL), 127–152 (LATG…VRYE), 180–203 (GFGA…EQLK), 227–253 (INFV…KTRL), and 282–300 (GLGL…AWTV).

This sequence belongs to the mitochondrial carrier (TC 2.A.29) family. SLC25A38 subfamily.

It is found in the mitochondrion inner membrane. It catalyses the reaction glycine(in) = glycine(out). In terms of biological role, mitochondrial glycine transporter that imports glycine into the mitochondrial matrix. Plays an important role in providing glycine for the first enzymatic step in heme biosynthesis, the condensation of glycine with succinyl-CoA to produce 5-aminolevulinate (ALA) in the mitochondrial matrix. This chain is Mitochondrial glycine transporter, found in Aspergillus fumigatus (strain CBS 144.89 / FGSC A1163 / CEA10) (Neosartorya fumigata).